A 960-amino-acid polypeptide reads, in one-letter code: RasGEF domain-containing serine/threonine-protein kinase X (960 aa).

The 254-residue stretch at 21-274 (LEFNEKIGKG…FDEILSQLKV (254 aa)) folds into the Protein kinase domain. Residues 27-35 (IGKGSFGSV) and lysine 48 contribute to the ATP site. Residue aspartate 140 is the Proton acceptor of the active site. Low complexity predominate over residues 314–368 (NISFSPNNSNNNNNNNNNISNISPDITTGIQQINLSSSGGSNNSSPSTPPQGSQL). Disordered stretches follow at residues 314 to 372 (NISF…VSLA) and 393 to 413 (GQLSTTPPPTSPIQSRPHKPS). Residues 437–565 (PCYAALTSHI…LGTTISNNEL (129 aa)) form the N-terminal Ras-GEF domain. Residues 596-651 (NNNNNNNNNPVNNINNINNNNSVNSSSSNNNNNNNNNNSNNNNNNNNNNNNNNNNN) are disordered. The Ras-GEF domain occupies 712–957 (HSTELARQIT…KNNSLKCEPP (246 aa)).

The protein belongs to the protein kinase superfamily. TKL Ser/Thr protein kinase family.

The catalysed reaction is L-seryl-[protein] + ATP = O-phospho-L-seryl-[protein] + ADP + H(+). It catalyses the reaction L-threonyl-[protein] + ATP = O-phospho-L-threonyl-[protein] + ADP + H(+). In terms of biological role, promotes the exchange of Ras-bound GDP by GTP. This is RasGEF domain-containing serine/threonine-protein kinase X (gefX) from Dictyostelium discoideum (Social amoeba).